We begin with the raw amino-acid sequence, 176 residues long: 3-hydroxydecanoyl-[acyl-carrier-protein] dehydratase (176 aa).

Residue H71 is part of the active site.

This sequence belongs to the thioester dehydratase family. FabA subfamily. As to quaternary structure, homodimer.

Its subcellular location is the cytoplasm. The catalysed reaction is a (3R)-hydroxyacyl-[ACP] = a (2E)-enoyl-[ACP] + H2O. It catalyses the reaction (3R)-hydroxydecanoyl-[ACP] = (2E)-decenoyl-[ACP] + H2O. The enzyme catalyses (2E)-decenoyl-[ACP] = (3Z)-decenoyl-[ACP]. It participates in lipid metabolism; fatty acid biosynthesis. Its function is as follows. Necessary for the introduction of cis unsaturation into fatty acids. Catalyzes the dehydration of (3R)-3-hydroxydecanoyl-ACP to E-(2)-decenoyl-ACP and then its isomerization to Z-(3)-decenoyl-ACP. Can catalyze the dehydratase reaction for beta-hydroxyacyl-ACPs with saturated chain lengths up to 16:0, being most active on intermediate chain length. This is 3-hydroxydecanoyl-[acyl-carrier-protein] dehydratase from Rhodopseudomonas palustris (strain HaA2).